The following is a 242-amino-acid chain: Probable septum site-determining protein MinC (242 aa).

This sequence belongs to the MinC family. As to quaternary structure, interacts with MinD and FtsZ.

Functionally, cell division inhibitor that blocks the formation of polar Z ring septums. Rapidly oscillates between the poles of the cell to destabilize FtsZ filaments that have formed before they mature into polar Z rings. Prevents FtsZ polymerization. In Buchnera aphidicola subsp. Schizaphis graminum (strain Sg), this protein is Probable septum site-determining protein MinC.